The following is a 235-amino-acid chain: Putative N-acetylmannosamine-6-phosphate 2-epimerase (235 aa).

Belongs to the NanE family.

The catalysed reaction is an N-acyl-D-glucosamine 6-phosphate = an N-acyl-D-mannosamine 6-phosphate. It participates in amino-sugar metabolism; N-acetylneuraminate degradation; D-fructose 6-phosphate from N-acetylneuraminate: step 3/5. Converts N-acetylmannosamine-6-phosphate (ManNAc-6-P) to N-acetylglucosamine-6-phosphate (GlcNAc-6-P). This is Putative N-acetylmannosamine-6-phosphate 2-epimerase from Photobacterium profundum (strain SS9).